The sequence spans 311 residues: Pyrimidine-specific ribonucleoside hydrolase RihA (311 aa).

Histidine 240 is a catalytic residue.

It belongs to the IUNH family. RihA subfamily.

Functionally, hydrolyzes cytidine or uridine to ribose and cytosine or uracil, respectively. This chain is Pyrimidine-specific ribonucleoside hydrolase RihA, found in Salmonella agona (strain SL483).